Consider the following 133-residue polypeptide: Oocytes ribonuclease (133 aa).

Positions 1 to 22 (MCAKSLLLVFGILLGLSHLSLS) are cleaved as a signal peptide. Position 23 is a pyrrolidone carboxylic acid (glutamine 23). Histidine 32 serves as the catalytic Proton acceptor. Intrachain disulfides connect cysteine 41-cysteine 93, cysteine 56-cysteine 103, cysteine 74-cysteine 118, and cysteine 115-cysteine 132. Residue 57 to 61 (KRVNT) coordinates substrate. The Proton donor role is filled by histidine 125.

Belongs to the pancreatic ribonuclease family. In terms of assembly, monomer.

Its subcellular location is the secreted. Functionally, preferentially cleaves single-stranded RNA at pyrimidine residues with a 3'flanking guanine. Hydrolyzes poly(U) and poly(C) as substrates, and prefers the former. The S-lectins in frog eggs may be involved in the fertilization and development of the frog embryo. This lectin agglutinates various animal cells, including normal lymphocytes, erythrocytes, and fibroblasts of animal and human origin. It is cytotoxic against several tumor cells. In Aquarana catesbeiana (American bullfrog), this protein is Oocytes ribonuclease (RCR).